Here is a 914-residue protein sequence, read N- to C-terminus: Exoglucanase-2 (914 aa).

The first 33 residues, 1-33 (MKRRLMKGISLLTLVFLIGIMLQLSLKSELTAY), serve as a signal peptide directing secretion. A CBM3 domain is found at 763–914 (VEGVLIIQSF…SGNLVYGIEP (152 aa)).

This sequence belongs to the glycosyl hydrolase 48 (cellulase L) family.

It carries out the reaction Hydrolysis of (1-&gt;4)-beta-D-glucosidic linkages in cellulose and cellotetraose, releasing cellobiose from the non-reducing ends of the chains.. This Thermoclostridium stercorarium (strain ATCC 35414 / DSM 8532 / NCIMB 11754) (Clostridium stercorarium) protein is Exoglucanase-2 (celY).